Reading from the N-terminus, the 528-residue chain is Vacuolar fusion protein MON1 homolog (528 aa).

Residues M1–C16 are compositionally biased toward polar residues. The interval M1–E50 is disordered.

The protein belongs to the MON1/SAND family. In terms of assembly, component of the Mon1-Ccz1 guanyl-nucleotide exchange factor complex made up of Mon1, Ccz1 and Bulli; the interaction of Bulli with the Mon1-Ccz1 heterodimer is mediated via the C-terminal Mic1 domain of Bulli. Mon1 and Ccz1 form a stable complex which displays Rab7 GEF activity with or without Bulli; GEF activity is enhanced by Bulli possibly by improving membrane association of the complex. Interacts with Rab5 and Rab7; preferentially binds GTP-bound Rab5 and GDP-bound Rab7.

The protein localises to the cytoplasm. The protein resides in the cytosol. The Rab7 guanyl-nucleotide exchange factor (GEF) activity of the Mon1-Ccz1 complex is autoinhibited by the N-terminal disordered region of Mon1. GEF activity is stimulated by Rab5-mediated recruitment to membranes. Part of the Mon1-Ccz1 guanyl-nucleotide exchange factor complex specific for Rab7 that promotes the exchange of GDP to GTP, converting Rab7 from an inactive GDP-bound form into an active GTP-bound form. Plays an important role in membrane trafficking through the secretory apparatus. Required for recruitment of Rab7 to endosomal and autophagosomal membranes to mediate endolysosomal and autolysosomal vesicle maturation. Required for fusion of multivesicular bodies and lysosomes but not their formation or trafficking. Involved in the replacement of Rab5 (and possibly Rab4) with Rab7, also known as Rab conversion or the Rab cascade, during endosomal maturation. The Mon1-Ccz1 complex is recruited to phosphatidylinositol 3-phosphate (PtdIns[3]P) enriched membranes by Rab5, which stimulates recruitment and guanyl-nucleotide exchange of Rab7. Together with Rab7 required for autolysosome formation in fat cells and autophagic degradation during starvation-induced basal and developmental autophagy. Involved in neuromuscular junction (NMJ) presynaptic bouton function and morphogenesis. Together with Rab7, regulates levels of postsynaptic glutamate receptor GluRIIA in the NMJ presynapse. This Drosophila melanogaster (Fruit fly) protein is Vacuolar fusion protein MON1 homolog.